The sequence spans 96 residues: Small ribosomal subunit protein bS18 (96 aa).

This sequence belongs to the bacterial ribosomal protein bS18 family. In terms of assembly, part of the 30S ribosomal subunit. Forms a tight heterodimer with protein bS6.

Functionally, binds as a heterodimer with protein bS6 to the central domain of the 16S rRNA, where it helps stabilize the platform of the 30S subunit. The polypeptide is Small ribosomal subunit protein bS18 (Borreliella afzelii (strain PKo) (Borrelia afzelii)).